Here is a 171-residue protein sequence, read N- to C-terminus: ATP synthase subunit b (171 aa).

A helical transmembrane segment spans residues 10–30 (GLYYGDSIFYAVCFLLLMWII).

Belongs to the ATPase B chain family. In terms of assembly, F-type ATPases have 2 components, F(1) - the catalytic core - and F(0) - the membrane proton channel. F(1) has five subunits: alpha(3), beta(3), gamma(1), delta(1), epsilon(1). F(0) has three main subunits: a(1), b(2) and c(10-14). The alpha and beta chains form an alternating ring which encloses part of the gamma chain. F(1) is attached to F(0) by a central stalk formed by the gamma and epsilon chains, while a peripheral stalk is formed by the delta and b chains.

The protein resides in the cell membrane. F(1)F(0) ATP synthase produces ATP from ADP in the presence of a proton or sodium gradient. F-type ATPases consist of two structural domains, F(1) containing the extramembraneous catalytic core and F(0) containing the membrane proton channel, linked together by a central stalk and a peripheral stalk. During catalysis, ATP synthesis in the catalytic domain of F(1) is coupled via a rotary mechanism of the central stalk subunits to proton translocation. Its function is as follows. Component of the F(0) channel, it forms part of the peripheral stalk, linking F(1) to F(0). The sequence is that of ATP synthase subunit b from Levilactobacillus brevis (strain ATCC 367 / BCRC 12310 / CIP 105137 / JCM 1170 / LMG 11437 / NCIMB 947 / NCTC 947) (Lactobacillus brevis).